A 399-amino-acid polypeptide reads, in one-letter code: Homeobox protein ceh-39 (399 aa).

Disordered regions lie at residues 32–91 (PEPA…GDTE) and 158–187 (AKKSRGRTAPRTPKSLETSKPGRGVKRPAS). Over residues 60–79 (SSMCGSSSSSSSSSYSSGSS) the composition is skewed to low complexity. The CUT DNA-binding region spans 205–291 (NRQIGDDEEL…VRRALCFMKK (87 aa)). Residues 315 to 374 (SDERIRRFTFTQTQLDSLHTVFQQQDRPNREMQQALSATLKLNRSTVGNFFMNARRRLPK) constitute a DNA-binding region (homeobox).

The protein belongs to the CUT homeobox family. In terms of tissue distribution, expressed in hermaphrodite gonads.

The protein resides in the nucleus. The protein localises to the chromosome. In terms of biological role, transcriptional regulator which is involved in the sex determination and X chromosome dosage compensation pathways. Directly binds to 5'-ATTGAT-3' sites in the promoter of sex-determining factor xol-1 to negatively regulate its expression and promote hermaphrodite development. Associates with condensed DNA during mitosis. In Caenorhabditis elegans, this protein is Homeobox protein ceh-39.